The following is a 622-amino-acid chain: Chaperone protein HscA homolog (622 aa).

The protein belongs to the heat shock protein 70 family.

Its function is as follows. Chaperone involved in the maturation of iron-sulfur cluster-containing proteins. Has a low intrinsic ATPase activity which is markedly stimulated by HscB. This is Chaperone protein HscA homolog from Burkholderia pseudomallei (strain K96243).